The sequence spans 332 residues: L-lactate dehydrogenase A chain (332 aa).

Residues 29–57 (GMVG…MEDK) and Arg99 each bind NAD(+). 3 residues coordinate substrate: Arg106, Asn138, and Arg169. Asn138 is a binding site for NAD(+). Residue His193 is the Proton acceptor of the active site. A substrate-binding site is contributed by Thr248.

The protein belongs to the LDH/MDH superfamily. LDH family. As to quaternary structure, homotetramer.

The protein resides in the cytoplasm. The enzyme catalyses (S)-lactate + NAD(+) = pyruvate + NADH + H(+). The protein operates within fermentation; pyruvate fermentation to lactate; (S)-lactate from pyruvate: step 1/1. In terms of biological role, interconverts simultaneously and stereospecifically pyruvate and lactate with concomitant interconversion of NADH and NAD(+). The chain is L-lactate dehydrogenase A chain (ldha) from Gillichthys seta (Shortjaw mudsucker).